The primary structure comprises 351 residues: MKKFIHIDMDCFYAAVEMRDNPKLANVPLAIGGNSRRGVLSTANYIAREYGVRSAMSNYHAKQLCPDLVIVPGRMAVYKDVSTQIRAVFSRYTDLIEPLSLDEAYLDVTHSEQCKGSATLIAQQIRADIYNATGLTASAGIAPIKFIAKIASDENKPNGQFVVLPDQVDAFLAQLPLGKIPGVGKVTLEKLNLKGLYTGQDVRKKGVNWMQQHVGNFGVSLYQKCAGEHIGRVSTERVRKSLSVEHTYEYNKNSLQECLEQLPSLLEELTTRLNKQQLQNQVNKLSVKVKFANFVVTSADQAHQQLNSDIFSELLAKAYQRGLQQPVRLLGIGVGIKNQPQHNLQLSILDM.

The UmuC domain occupies Phe4–Gly184. Residues Asp8 and Asp102 each coordinate Mg(2+). Glu103 is a catalytic residue.

This sequence belongs to the DNA polymerase type-Y family. Monomer. It depends on Mg(2+) as a cofactor.

The protein resides in the cytoplasm. It carries out the reaction DNA(n) + a 2'-deoxyribonucleoside 5'-triphosphate = DNA(n+1) + diphosphate. Poorly processive, error-prone DNA polymerase involved in untargeted mutagenesis. Copies undamaged DNA at stalled replication forks, which arise in vivo from mismatched or misaligned primer ends. These misaligned primers can be extended by PolIV. Exhibits no 3'-5' exonuclease (proofreading) activity. May be involved in translesional synthesis, in conjunction with the beta clamp from PolIII. This is DNA polymerase IV from Pseudoalteromonas translucida (strain TAC 125).